Here is a 653-residue protein sequence, read N- to C-terminus: Rab proteins geranylgeranyltransferase component A 1 (653 aa).

The interval 606–653 is disordered; sequence PPPPNPEDIILDGDSLQPEASESSAIPEANSETFKESTNLGNLEESSE. A compositionally biased stretch (polar residues) spans 623-646; that stretch reads PEASESSAIPEANSETFKESTNLG.

Belongs to the Rab GDI family. Monomer. Heterotrimer composed of RABGGTA, RABGGTB and CHM; within this trimer, RABGGTA and RABGGTB form the catalytic component B, while CHM (component A) mediates Rab protein binding. Can associate with the Rab GGTase dimer (RGGT or component B) prior to Rab protein binding; the association is stabilized by geranylgeranyl pyrophosphate (GGpp). The CHM:RGGT:Rab complex is destabilized by GGpp. Interacts with RAB1A, RAB1B, RAB5A, RAB7A and RAB27A and mediates their prenylation. Interacts with the non-phosphorylated forms of RAB3A, RAB3B, RAB3C, RAB3D, RAB5B, RAB5C, RAB8A, RAB8B, RAB10, RAB12, RAB35, and RAB43.

It is found in the cytoplasm. Its subcellular location is the cytosol. Its function is as follows. Substrate-binding subunit of the Rab geranylgeranyltransferase (GGTase) complex. Binds unprenylated Rab proteins and presents the substrate peptide to the catalytic component B composed of RABGGTA and RABGGTB, and remains bound to it after the geranylgeranyl transfer reaction. The component A is thought to be regenerated by transferring its prenylated Rab back to the donor membrane. Besides, a pre-formed complex consisting of CHM and the Rab GGTase dimer (RGGT or component B) can bind to and prenylate Rab proteins; this alternative pathway is proposed to be the predominant pathway for Rab protein geranylgeranylation. The chain is Rab proteins geranylgeranyltransferase component A 1 (CHM) from Homo sapiens (Human).